Consider the following 242-residue polypeptide: Caffeoyl-CoA O-methyltransferase 2 (242 aa).

Lys-16 is a binding site for substrate. S-adenosyl-L-methionine contacts are provided by residues Thr-58, Glu-80, 82-83 (GV), Ser-88, Asp-106, and Ala-135. Asp-158 contacts substrate. Asp-158 contacts a divalent metal cation. S-adenosyl-L-methionine is bound at residue Asp-160. A divalent metal cation-binding residues include Asp-184 and Asn-185. Asn-189 is a binding site for substrate.

The protein belongs to the class I-like SAM-binding methyltransferase superfamily. Cation-dependent O-methyltransferase family. CCoAMT subfamily. It depends on a divalent metal cation as a cofactor. Mostly expressed in petal limbs and tubes, and, at low levels, in stems, roots and leaves.

The protein resides in the cytoplasm. The protein localises to the cytosol. The enzyme catalyses (E)-caffeoyl-CoA + S-adenosyl-L-methionine = (E)-feruloyl-CoA + S-adenosyl-L-homocysteine + H(+). It carries out the reaction (E)-5-hydroxyferuloyl-CoA + S-adenosyl-L-methionine = (E)-sinapoyl-CoA + S-adenosyl-L-homocysteine + H(+). The protein operates within aromatic compound metabolism; phenylpropanoid biosynthesis. Involved in the production of floral volatile phenylpropanoids in flowers of fragrant cultivars (e.g. cv. Mitchell and cv. V26) from cinnamic acid, a common precursor with the anthocyanin biosynthesis pathway involved in flower pigmentation. Methylates caffeoyl-CoA to feruloyl-CoA, also able to methylate 5-hydroxyferuloyl-CoA. The polypeptide is Caffeoyl-CoA O-methyltransferase 2 (Petunia hybrida (Petunia)).